Here is a 249-residue protein sequence, read N- to C-terminus: Mediator of RNA polymerase II transcription subunit 19 (249 aa).

Disordered stretches follow at residues 1-68 (MEGF…SSRR) and 178-249 (QPPK…SGLR). Residues 9–18 (AASEPSSIPS) show a composition bias toward low complexity. Over residues 45 to 56 (VPGPPLPIPPPL) the composition is skewed to pro residues. Basic residues-rich tracts occupy residues 179 to 190 (PPKKKNKKHKQS) and 221 to 233 (RRKK…KKSR).

The protein belongs to the Mediator complex subunit 19 family. In terms of assembly, component of the Mediator complex.

Its subcellular location is the nucleus. Functionally, component of the Mediator complex, a coactivator involved in the regulated transcription of nearly all RNA polymerase II-dependent genes. Mediator functions as a bridge to convey information from gene-specific regulatory proteins to the basal RNA polymerase II transcription machinery. Mediator is recruited to promoters by direct interactions with regulatory proteins and serves as a scaffold for the assembly of a functional preinitiation complex with RNA polymerase II and the general transcription factors. This chain is Mediator of RNA polymerase II transcription subunit 19 (med19), found in Xenopus tropicalis (Western clawed frog).